We begin with the raw amino-acid sequence, 463 residues long: ATP synthase subunit beta 1 (463 aa).

Residue 152–159 (GGAGVGKT) participates in ATP binding.

This sequence belongs to the ATPase alpha/beta chains family. F-type ATPases have 2 components, CF(1) - the catalytic core - and CF(0) - the membrane proton channel. CF(1) has five subunits: alpha(3), beta(3), gamma(1), delta(1), epsilon(1). CF(0) has three main subunits: a(1), b(2) and c(9-12). The alpha and beta chains form an alternating ring which encloses part of the gamma chain. CF(1) is attached to CF(0) by a central stalk formed by the gamma and epsilon chains, while a peripheral stalk is formed by the delta and b chains.

It is found in the cell inner membrane. It catalyses the reaction ATP + H2O + 4 H(+)(in) = ADP + phosphate + 5 H(+)(out). Functionally, produces ATP from ADP in the presence of a proton gradient across the membrane. The catalytic sites are hosted primarily by the beta subunits. The sequence is that of ATP synthase subunit beta 1 from Shewanella frigidimarina (strain NCIMB 400).